Consider the following 514-residue polypeptide: Membrane-bound lytic murein transglycosylase F (514 aa).

Positions 1–30 (MKKLKINYLFIGILTLLLAAALWPSIPWFG) are cleaved as a signal peptide. Residues 31 to 269 (KTENHIAAIQ…RIEEKYLGHG (239 aa)) form a non-LT domain region. The segment at 270–514 (DDFDYVDTRS…LFTPQKKEEK (245 aa)) is LT domain. Glu314 is a catalytic residue.

The protein in the N-terminal section; belongs to the bacterial solute-binding protein 3 family. In the C-terminal section; belongs to the transglycosylase Slt family.

The protein resides in the cell outer membrane. It catalyses the reaction Exolytic cleavage of the (1-&gt;4)-beta-glycosidic linkage between N-acetylmuramic acid (MurNAc) and N-acetylglucosamine (GlcNAc) residues in peptidoglycan, from either the reducing or the non-reducing ends of the peptidoglycan chains, with concomitant formation of a 1,6-anhydrobond in the MurNAc residue.. Murein-degrading enzyme that degrades murein glycan strands and insoluble, high-molecular weight murein sacculi, with the concomitant formation of a 1,6-anhydromuramoyl product. Lytic transglycosylases (LTs) play an integral role in the metabolism of the peptidoglycan (PG) sacculus. Their lytic action creates space within the PG sacculus to allow for its expansion as well as for the insertion of various structures such as secretion systems and flagella. The chain is Membrane-bound lytic murein transglycosylase F from Salmonella paratyphi A (strain ATCC 9150 / SARB42).